The following is a 609-amino-acid chain: Hemagglutinin/proteinase (609 aa).

An N-terminal signal peptide occupies residues M1–A24. Residues A25–A196 constitute a propeptide that is removed on maturation. H343 lines the Zn(2+) pocket. E344 is a catalytic residue. Zn(2+)-binding residues include H347 and E367. H426 (proton donor) is an active-site residue.

Belongs to the peptidase M4 family. Zn(2+) serves as cofactor.

The protein resides in the secreted. Its function is as follows. May play a role in the pathogenesis of cholera. Hap nicks and activates the A subunit of cholera enterotoxin and related enterotoxins. The polypeptide is Hemagglutinin/proteinase (hap) (Vibrio cholerae serotype O1 (strain ATCC 39315 / El Tor Inaba N16961)).